The following is a 256-amino-acid chain: D-aminoacyl-tRNA deacylase (256 aa).

The protein belongs to the DtdA deacylase family. In terms of assembly, monomer. Zn(2+) is required as a cofactor.

It carries out the reaction a D-aminoacyl-tRNA + H2O = a tRNA + a D-alpha-amino acid + H(+). The catalysed reaction is glycyl-tRNA(Ala) + H2O = tRNA(Ala) + glycine + H(+). D-aminoacyl-tRNA deacylase with broad substrate specificity. By recycling D-aminoacyl-tRNA to D-amino acids and free tRNA molecules, this enzyme counteracts the toxicity associated with the formation of D-aminoacyl-tRNA entities in vivo. This Thermoplasma volcanium (strain ATCC 51530 / DSM 4299 / JCM 9571 / NBRC 15438 / GSS1) protein is D-aminoacyl-tRNA deacylase.